The following is a 678-amino-acid chain: MPPSKGLNGKLEKPKHALQAIVLSDSYNYRFRPLTLDKPRCLLPLANTPLIEYTFEFLALAGVQEVYVFCCAHAGQIREYIEKSKWNLPSSPFSVNTIVSRESLSVGDALRELDSKQLITSDFILVSGDVVSNVPLNEVLKEHRKRREDDKNAIMTMVVREASPFHRTRARTESSVFVIDKKTSQCVHYQANERGKHYVSMDPEIFNEHEELEVRNDLIDCQIDICSNDVPALFTENFDYQDIRKDFVYGVLTSDLLGKKIHCHVAKENYAARVRSLQTYDAISKDVLSRWVYPFVPDSNLLNQTFSYQRHQIYKEEDVVLARSCIIKARTLIGAYTKVGDASVVANTIIGRNCTIGSNCSIDSAFLWEDVVIGDNCRIGKAILANSVKIGNNCSIEDGAIVAAGVVIGDNTIIEKNKRLTTFESHSQGTLNDPSLVGIGGRGQEYHAEEDSDDEGEFMEASGLIESTNELHLSDSESSETSSSSEEDMEFIPFSARRDSANTINSEDFDEGDFNKEAQQSLERAFEENHQIDIAALELNTLRMAMNANYHEVRSAIVLALLRRIMHLDVSPKEALAKVMTRWGPLLAKLTFSHEEQVDNVLTLQKYCVRLSMTRHFLQLLGYFYQLEIAEENAIQEWYSDPRSSEGELAALRDAGGKQFVDWLNTAESESESEEGSE.

Position 172 is a phosphothreonine (Thr-172). The segment at 467 to 489 (STNELHLSDSESSETSSSSEEDM) is disordered. At Ser-500 the chain carries Phosphoserine. Thr-503 bears the Phosphothreonine mark. Residue Ser-506 is modified to Phosphoserine. Residues 508–674 (DFDEGDFNKE…NTAESESESE (167 aa)) form the W2 domain.

It belongs to the eIF-2B gamma/epsilon subunits family. Component of the translation initiation factor 2B (eIF2B) complex which is a heterodecamer of two sets of five different subunits: alpha, beta, gamma, delta and epsilon. Subunits alpha, beta and delta comprise a regulatory subcomplex and subunits epsilon and gamma comprise a catalytic subcomplex. Within the complex, the hexameric regulatory complex resides at the center, with the two heterodimeric catalytic subcomplexes bound on opposite sides.

The protein localises to the cytoplasm. The protein resides in the cytosol. Functionally, acts as a component of the translation initiation factor 2B (eIF2B) complex, which catalyzes the exchange of GDP for GTP on the eukaryotic initiation factor 2 (eIF2) complex gamma subunit. Its guanine nucleotide exchange factor activity is repressed when bound to eIF2 complex phosphorylated on the alpha subunit, thereby limiting the amount of methionyl-initiator methionine tRNA available to the ribosome and consequently global translation is repressed. This chain is Translation initiation factor eIF2B subunit epsilon (tif225), found in Schizosaccharomyces pombe (strain 972 / ATCC 24843) (Fission yeast).